The primary structure comprises 637 residues: ATP-dependent zinc metalloprotease FtsH (637 aa).

The Cytoplasmic portion of the chain corresponds to 1-6; that stretch reads MNNQGR. The helical transmembrane segment at 7–27 threads the bilayer; that stretch reads SILAWAALFIFVILLFNVFQS. The Periplasmic portion of the chain corresponds to 28 to 103; the sequence is DGLLGVRNNI…VVPLETRMNT (76 aa). Residues 104–124 form a helical membrane-spanning segment; sequence FLGFLISWFPMLLLIGVWVFF. Residues 125–637 are Cytoplasmic-facing; that stretch reads MRQMHGGGKA…TKDKKENIIS (513 aa). 195–202 contacts ATP; sequence GPPGTGKT. Residue H417 coordinates Zn(2+). E418 is a catalytic residue. Zn(2+) contacts are provided by H421 and D495.

This sequence in the central section; belongs to the AAA ATPase family. The protein in the C-terminal section; belongs to the peptidase M41 family. In terms of assembly, homohexamer. Zn(2+) serves as cofactor.

The protein resides in the cell inner membrane. Functionally, acts as a processive, ATP-dependent zinc metallopeptidase for both cytoplasmic and membrane proteins. Plays a role in the quality control of integral membrane proteins. The polypeptide is ATP-dependent zinc metalloprotease FtsH (Rickettsia prowazekii (strain Madrid E)).